An 88-amino-acid polypeptide reads, in one-letter code: Small ribosomal subunit protein bS20 (88 aa).

Belongs to the bacterial ribosomal protein bS20 family.

Its function is as follows. Binds directly to 16S ribosomal RNA. This is Small ribosomal subunit protein bS20 from Chelativorans sp. (strain BNC1).